Reading from the N-terminus, the 253-residue chain is 5'/3'-nucleotidase SurE (253 aa).

The a divalent metal cation site is built by D8, D9, S39, and N92.

The protein belongs to the SurE nucleotidase family. A divalent metal cation is required as a cofactor.

Its subcellular location is the cytoplasm. It carries out the reaction a ribonucleoside 5'-phosphate + H2O = a ribonucleoside + phosphate. It catalyses the reaction a ribonucleoside 3'-phosphate + H2O = a ribonucleoside + phosphate. The catalysed reaction is [phosphate](n) + H2O = [phosphate](n-1) + phosphate + H(+). Its function is as follows. Nucleotidase with a broad substrate specificity as it can dephosphorylate various ribo- and deoxyribonucleoside 5'-monophosphates and ribonucleoside 3'-monophosphates with highest affinity to 3'-AMP. Also hydrolyzes polyphosphate (exopolyphosphatase activity) with the preference for short-chain-length substrates (P20-25). Might be involved in the regulation of dNTP and NTP pools, and in the turnover of 3'-mononucleotides produced by numerous intracellular RNases (T1, T2, and F) during the degradation of various RNAs. The chain is 5'/3'-nucleotidase SurE from Escherichia coli O7:K1 (strain IAI39 / ExPEC).